A 705-amino-acid polypeptide reads, in one-letter code: Elongation factor G (705 aa).

Residues 8–290 (ERYRNFGIMA…GVVHLLPSPA (283 aa)) form the tr-type G domain. GTP-binding positions include 17 to 24 (AHIDAGKT), 88 to 92 (DTPGH), and 142 to 145 (NKMD). Residues 290-309 (ADRPPVQGIDENEKEDTRDA) form a disordered region.

Belongs to the TRAFAC class translation factor GTPase superfamily. Classic translation factor GTPase family. EF-G/EF-2 subfamily.

It is found in the cytoplasm. Its function is as follows. Catalyzes the GTP-dependent ribosomal translocation step during translation elongation. During this step, the ribosome changes from the pre-translocational (PRE) to the post-translocational (POST) state as the newly formed A-site-bound peptidyl-tRNA and P-site-bound deacylated tRNA move to the P and E sites, respectively. Catalyzes the coordinated movement of the two tRNA molecules, the mRNA and conformational changes in the ribosome. The protein is Elongation factor G of Xanthomonas campestris pv. campestris (strain 8004).